Here is a 201-residue protein sequence, read N- to C-terminus: dCTP deaminase, dUMP-forming (201 aa).

Residues Lys-101–Arg-106, Asp-119, Thr-127–Glu-129, Gln-148, Tyr-162, and Gln-174 each bind dCTP. The active-site Proton donor/acceptor is Glu-129.

It belongs to the dCTP deaminase family. In terms of assembly, homotrimer.

It catalyses the reaction dCTP + 2 H2O = dUMP + NH4(+) + diphosphate. It participates in pyrimidine metabolism; dUMP biosynthesis; dUMP from dCTP: step 1/1. Its function is as follows. Bifunctional enzyme that catalyzes both the deamination of dCTP to dUTP and the hydrolysis of dUTP to dUMP without releasing the toxic dUTP intermediate. This is dCTP deaminase, dUMP-forming from Parafrankia sp. (strain EAN1pec).